The primary structure comprises 367 residues: Apolipoprotein A-V (367 aa).

The N-terminal stretch at Met1–Thr20 is a signal peptide. Ser56 carries the post-translational modification Phosphoserine. The disordered stretch occupies residues Leu71–Gly90.

This sequence belongs to the apolipoprotein A1/A4/E family. Interacts with GPIHBP1. Interacts with SORL1; this interaction leads to APOA5 internalization and sorting either to lysosomes and degradation, or to the trans-Golgi network. Post-translationally, phosphorylated by FAM20C in the extracellular medium.

It is found in the secreted. It localises to the early endosome. The protein localises to the late endosome. Its subcellular location is the golgi apparatus. The protein resides in the trans-Golgi network. Functionally, minor apolipoprotein mainly associated with HDL and to a lesser extent with VLDL. May also be associated with chylomicrons. Important determinant of plasma triglyceride (TG) levels by both being a potent stimulator of apo-CII lipoprotein lipase (LPL) TG hydrolysis and an inhibitor of the hepatic VLDL-TG production rate (without affecting the VLDL-apoB production rate). Activates poorly lecithin:cholesterol acyltransferase (LCAT) and does not enhance efflux of cholesterol from macrophages. Binds heparin. The sequence is that of Apolipoprotein A-V (APOA5) from Leptonychotes weddellii (Weddell seal).